The following is a 215-amino-acid chain: Ribose-5-phosphate isomerase A (215 aa).

Substrate-binding positions include 26–29 (TGST), 79–82 (DGAD), and 92–95 (KGGG). The active-site Proton acceptor is glutamate 101. Lysine 119 provides a ligand contact to substrate.

This sequence belongs to the ribose 5-phosphate isomerase family. In terms of assembly, homodimer.

The catalysed reaction is aldehydo-D-ribose 5-phosphate = D-ribulose 5-phosphate. Its pathway is carbohydrate degradation; pentose phosphate pathway; D-ribose 5-phosphate from D-ribulose 5-phosphate (non-oxidative stage): step 1/1. Its function is as follows. Catalyzes the reversible conversion of ribose-5-phosphate to ribulose 5-phosphate. In Xanthomonas axonopodis pv. citri (strain 306), this protein is Ribose-5-phosphate isomerase A.